The sequence spans 240 residues: Small ribosomal subunit protein uS2 (240 aa).

The protein belongs to the universal ribosomal protein uS2 family. As to quaternary structure, component of the small ribosomal subunit. Mature ribosomes consist of a small (40S) and a large (60S) subunit. The 40S subunit contains about 33 different proteins and 1 molecule of RNA (18S). The 60S subunit contains about 49 different proteins and 3 molecules of RNA (25S, 5.8S and 5S). Interacts with RPS21.

Its subcellular location is the cytoplasm. Functionally, required for the assembly and/or stability of the 40S ribosomal subunit. Required for the processing of the 20S rRNA-precursor to mature 18S rRNA in a late step of the maturation of 40S ribosomal subunits. This is Small ribosomal subunit protein uS2 from Enterocytozoon bieneusi (strain H348) (Microsporidian parasite).